Reading from the N-terminus, the 82-residue chain is Small ribosomal subunit protein uS17 (82 aa).

Belongs to the universal ribosomal protein uS17 family. In terms of assembly, part of the 30S ribosomal subunit.

Its function is as follows. One of the primary rRNA binding proteins, it binds specifically to the 5'-end of 16S ribosomal RNA. This chain is Small ribosomal subunit protein uS17, found in Rickettsia typhi (strain ATCC VR-144 / Wilmington).